Consider the following 175-residue polypeptide: Large ribosomal subunit protein uL5 (175 aa).

Belongs to the universal ribosomal protein uL5 family. Part of the 50S ribosomal subunit; contacts the 5S rRNA and probably tRNA. Forms a bridge to the 30S subunit in the 70S ribosome.

In terms of biological role, this is one of the proteins that bind and probably mediate the attachment of the 5S RNA into the large ribosomal subunit, where it forms part of the central protuberance. In the 70S ribosome it contacts protein S13 of the 30S subunit (bridge B1b), connecting the 2 subunits; this bridge is implicated in subunit movement. May contact the P site tRNA; the 5S rRNA and some of its associated proteins might help stabilize positioning of ribosome-bound tRNAs. The polypeptide is Large ribosomal subunit protein uL5 (Halobacterium salinarum (strain ATCC 29341 / DSM 671 / R1)).